The sequence spans 221 residues: Max dimerization protein 1 (221 aa).

The short motif at 21 to 49 (RREREAEHGYASMLPYNSKERDGLKRKSK) is the Nuclear localization signal element. 2 disordered regions span residues 28–67 (HGYA…EKNR) and 176–202 (DWSS…DEGY). In terms of domain architecture, bHLH spans 55-107 (NSRSTHNEMEKNRRAHLRLCLEKLKILVPLGPESNRHTTLSLLTRAKSHIKKL). Positions 192 to 202 (SMQSICSDEGY) are enriched in polar residues.

Efficient DNA binding requires dimerization with another bHLH protein. Binds DNA as a heterodimer with MAX.

The protein localises to the nucleus. Functionally, transcriptional repressor. MAD binds with MAX to form a sequence-specific DNA-binding protein complex which recognizes the core sequence 5'-CAC[GA]TG-3'. MAD thus antagonizes MYC transcriptional activity by competing for MAX. The protein is Max dimerization protein 1 (mxd1) of Xenopus tropicalis (Western clawed frog).